The sequence spans 283 residues: 4-diphosphocytidyl-2-C-methyl-D-erythritol kinase (283 aa).

K10 is an active-site residue. 99–109 (PMGGGLGGGSS) contributes to the ATP binding site. The active site involves D141.

This sequence belongs to the GHMP kinase family. IspE subfamily. As to quaternary structure, homodimer.

It carries out the reaction 4-CDP-2-C-methyl-D-erythritol + ATP = 4-CDP-2-C-methyl-D-erythritol 2-phosphate + ADP + H(+). Its pathway is isoprenoid biosynthesis; isopentenyl diphosphate biosynthesis via DXP pathway; isopentenyl diphosphate from 1-deoxy-D-xylulose 5-phosphate: step 3/6. Functionally, catalyzes the phosphorylation of the position 2 hydroxy group of 4-diphosphocytidyl-2C-methyl-D-erythritol. The protein is 4-diphosphocytidyl-2-C-methyl-D-erythritol kinase of Escherichia coli O127:H6 (strain E2348/69 / EPEC).